Here is a 94-residue protein sequence, read N- to C-terminus: Large ribosomal subunit protein bL28 (94 aa).

It belongs to the bacterial ribosomal protein bL28 family.

The polypeptide is Large ribosomal subunit protein bL28 (Novosphingobium aromaticivorans (strain ATCC 700278 / DSM 12444 / CCUG 56034 / CIP 105152 / NBRC 16084 / F199)).